The chain runs to 160 residues: MADDNNSNGATNPTLSILAQYTKDLSFENPGAPRSLQARDKAPTININVNVNANPLSDTDFDVVLSLNAEAKDGDKTVFHTELVYGGVFRVAGFPQEHMLPVLFIECPRMLFPFARQIIADVTRNGGFPPLMIDPIDFTQMFAQRVAEEQARAKVQAVPN.

Belongs to the SecB family. In terms of assembly, homotetramer, a dimer of dimers. One homotetramer interacts with 1 SecA dimer.

The protein localises to the cytoplasm. Functionally, one of the proteins required for the normal export of preproteins out of the cell cytoplasm. It is a molecular chaperone that binds to a subset of precursor proteins, maintaining them in a translocation-competent state. It also specifically binds to its receptor SecA. In Rhizobium etli (strain ATCC 51251 / DSM 11541 / JCM 21823 / NBRC 15573 / CFN 42), this protein is Protein-export protein SecB.